We begin with the raw amino-acid sequence, 222 residues long: Mediator of RNA polymerase II transcription subunit 7 (222 aa).

The tract at residues 34-55 (YKEKKAASAKQTAPNNSNGGSE) is disordered. Over residues 42–53 (AKQTAPNNSNGG) the composition is skewed to polar residues.

This sequence belongs to the Mediator complex subunit 7 family. Component of the Mediator complex, which is composed of at least 21 subunits that form three structurally distinct submodules. The Mediator head module contains MED6, MED8, MED11, SRB4/MED17, SRB5/MED18, ROX3/MED19, SRB2/MED20 and SRB6/MED22, the middle module contains MED1, MED4, NUT1/MED5, MED7, CSE2/MED9, NUT2/MED10, SRB7/MED21 and SOH1/MED31, and the tail module contains MED2, PGD1/MED3, RGR1/MED14, GAL11/MED15 and SIN4/MED16. The head and the middle modules interact directly with RNA polymerase II, whereas the elongated tail module interacts with gene-specific regulatory proteins. MED7 interacts directly with MED1, MED4 and SRB7/MED21.

It is found in the nucleus. Component of the Mediator complex, a coactivator involved in the regulated transcription of nearly all RNA polymerase II-dependent genes. Mediator functions as a bridge to convey information from gene-specific regulatory proteins to the basal RNA polymerase II transcription machinery. The Mediator complex, having a compact conformation in its free form, is recruited to promoters by direct interactions with regulatory proteins and serves for the assembly of a functional preinitiation complex with RNA polymerase II and the general transcription factors. The Mediator complex unfolds to an extended conformation and partially surrounds RNA polymerase II, specifically interacting with the unphosphorylated form of the C-terminal domain (CTD) of RNA polymerase II. The Mediator complex dissociates from the RNA polymerase II holoenzyme and stays at the promoter when transcriptional elongation begins. This is Mediator of RNA polymerase II transcription subunit 7 (MED7) from Saccharomyces cerevisiae (strain ATCC 204508 / S288c) (Baker's yeast).